The chain runs to 317 residues: ADP-L-glycero-D-manno-heptose-6-epimerase (317 aa).

NADP(+) is bound by residues 10 to 11 (FI), 31 to 32 (DD), Lys-38, Lys-53, 75 to 79 (QGACS), and Asn-92. The active-site Proton acceptor is Tyr-139. Lys-143 is an NADP(+) binding site. Residue Asn-166 participates in substrate binding. NADP(+) is bound by residues Val-167 and Lys-175. Catalysis depends on Lys-175, which acts as the Proton acceptor. Residues Gly-177, His-184, 198-201 (FEGV), Arg-211, and Tyr-275 each bind substrate.

It belongs to the NAD(P)-dependent epimerase/dehydratase family. HldD subfamily. Homopentamer. Requires NADP(+) as cofactor.

The catalysed reaction is ADP-D-glycero-beta-D-manno-heptose = ADP-L-glycero-beta-D-manno-heptose. It participates in nucleotide-sugar biosynthesis; ADP-L-glycero-beta-D-manno-heptose biosynthesis; ADP-L-glycero-beta-D-manno-heptose from D-glycero-beta-D-manno-heptose 7-phosphate: step 4/4. Catalyzes the interconversion between ADP-D-glycero-beta-D-manno-heptose and ADP-L-glycero-beta-D-manno-heptose via an epimerization at carbon 6 of the heptose. The protein is ADP-L-glycero-D-manno-heptose-6-epimerase of Shewanella piezotolerans (strain WP3 / JCM 13877).